A 161-amino-acid polypeptide reads, in one-letter code: NADH:FMN oxidoreductase (161 aa).

FMN is bound by residues D30, A37–T40, C54–T61, A88, R94, and F151.

Belongs to the non-flavoprotein flavin reductase family.

Its subcellular location is the cytoplasm. The enzyme catalyses FMNH2 + NAD(+) = FMN + NADH + 2 H(+). It carries out the reaction FADH2 + NAD(+) = FAD + NADH + 2 H(+). It functions in the pathway sulfur metabolism; dibenzothiophene degradation. Functionally, an NADH:FMN oxidoreductase which supplies reduced FMN for the '4S' desulfurization pathway that removes covalently bound sulfur from dibenzothiophene (DBT) without breaking carbon-carbon bonds. Can also use FAD. Provides DszC and probably also DszA (DBT-monooxygenase and DBTO2-monooxygenase respectively) with reduced flavin (FMN and/or FAD). This chain is NADH:FMN oxidoreductase, found in Mycolicibacterium goodii (Mycobacterium goodii).